Consider the following 268-residue polypeptide: MAKVPDLFEDLKNCYSENEDYSSEIDHLSLNQKSFYDASYEPLREDQMDKFMSLDTSETSKTSRLSFKENVVMVAASGKILKKRRLSLNQFITDDDLEAIANNTEEEIIKPRSAHYSFQSNVKYNLLRVIHQECILNDALNQSLIRDLSGPYLTAATLNNLEEAVKFDMVAYVSEEDSQLPVTLRISKTQLFVSAQNEDEPVLLKEMPETPKIIKDETNLLFFWEKHGSMDYFKSVAHPKLFIATKQEKLVHMASGPPSVTDFQILEK.

The propeptide occupies 1–112 (MAKVPDLFED…NTEEEIIKPR (112 aa)). N6-acetyllysine is present on lysine 82. The nuclear localization signal (NLS) stretch occupies residues 82–86 (KKRRL). Serine 87 is subject to Phosphoserine. N-linked (GlcNAc...) asparagine glycans are attached at residues asparagine 102 and asparagine 141.

This sequence belongs to the IL-1 family. Monomer. Interacts with TMED10; the interaction mediates the translocation from the cytoplasm into the ERGIC (endoplasmic reticulum-Golgi intermediate compartment) and thereby secretion. Interacts with IL1R1. Interacts with S100A13; this interaction is the first step in the export of IL1A, followed by direct translocation of this complex across the plasma membrane. In terms of processing, acetylated within its nuclear localization sequence, which impacts subcellular localization. Proteolytic processed by CAPN1 in a calcium-dependent manner. Cleavage from 31 kDa precursor to 18 kDa biologically active molecules. Post-translationally, phosphorylated. Phosphorylation greatly enhances susceptibility to digestion and promotes the conversion of pre-IL1A alpha to the biologically active IL1A.

The protein resides in the nucleus. Its subcellular location is the cytoplasm. The protein localises to the secreted. In terms of biological role, cytokine constitutively present intracellularly in nearly all resting non-hematopoietic cells that plays an important role in inflammation and bridges the innate and adaptive immune systems. After binding to its receptor IL1R1 together with its accessory protein IL1RAP, forms the high affinity interleukin-1 receptor complex. Signaling involves the recruitment of adapter molecules such as MYD88, IRAK1 or IRAK4. In turn, mediates the activation of NF-kappa-B and the three MAPK pathways p38, p42/p44 and JNK pathways. Within the cell, acts as an alarmin and cell death results in its liberation in the extracellular space after disruption of the cell membrane to induce inflammation and alert the host to injury or damage. In addition to its role as a danger signal, which occurs when the cytokine is passively released by cell necrosis, directly senses DNA damage and acts as signal for genotoxic stress without loss of cell integrity. The polypeptide is Interleukin-1 alpha (IL1A) (Bubalus carabanensis (Swamp type water buffalo)).